Consider the following 188-residue polypeptide: MSQEDLEIDLDAIQRRMDGAMHALRTEFGSLRTGRASASILEPIHVDAYGQQTPLNQLGTINVPEPRMVVINVWDKGMISKVERAIRDSGIGINPVVDGPIIRLPIPELNEERRKELTKVAAHYAEQARVAIRNVRRDGMDQIKKAKAAGMAEDDQKMWSDEVQALTDKAIAAVDKALEEKQKEIMQV.

The protein belongs to the RRF family.

The protein resides in the cytoplasm. In terms of biological role, responsible for the release of ribosomes from messenger RNA at the termination of protein biosynthesis. May increase the efficiency of translation by recycling ribosomes from one round of translation to another. This chain is Ribosome-recycling factor, found in Cereibacter sphaeroides (strain ATCC 17025 / ATH 2.4.3) (Rhodobacter sphaeroides).